Consider the following 397-residue polypeptide: Serpin B10 (397 aa).

Residues 74–77 (KKRK) carry the Nuclear localization signal motif.

This sequence belongs to the serpin family. Ov-serpin subfamily. Expressed in many tissues, including brain, heart, kidney, liver, lung, prostate, skin, spleen and stomach.

The protein localises to the nucleus. It is found in the cytoplasm. Protease inhibitor that may play a role in the regulation of protease activities during hematopoiesis and apoptosis induced by TNF. May regulate protease activities in the cytoplasm and in the nucleus. Inhibits plasmin. The chain is Serpin B10 (Serpinb10) from Rattus norvegicus (Rat).